The chain runs to 535 residues: E3 ubiquitin-protein ligase rnf168 (535 aa).

The RING-type zinc finger occupies 16–55 (CPICQEILLEPVTLPCKHTLCNPCFQMTVEKASLCCPFCR). Residues 112–130 (LCKPGEIRQEYEAEVSKIE) carry the LR motif 1 motif. A UMI motif motif is present at residues 145–153 (EDYIQKLLA). Short sequence motifs (MIU motif) lie at residues 170–193 (IEEQ…LSNA) and 406–429 (RRKQ…KELK). Residues 429–443 (KQVNRGKGSPDEYQL) are compositionally biased toward basic and acidic residues. A disordered region spans residues 429–535 (KQVNRGKGSP…LDLFQRSAGK (107 aa)). The LR motif 2 motif lies at 433 to 444 (RGKGSPDEYQLR). Composition is skewed to polar residues over residues 462–478 (NEQT…QSGY) and 492–507 (ITSS…TNTE).

Belongs to the RNF168 family. Monomer.

It is found in the nucleus. The enzyme catalyses S-ubiquitinyl-[E2 ubiquitin-conjugating enzyme]-L-cysteine + [acceptor protein]-L-lysine = [E2 ubiquitin-conjugating enzyme]-L-cysteine + N(6)-ubiquitinyl-[acceptor protein]-L-lysine.. The protein operates within protein modification; protein ubiquitination. Its function is as follows. E3 ubiquitin-protein ligase required for accumulation of repair proteins to sites of DNA damage. Acts with ube2n/ubc13 to amplify the rnf8-dependent histone ubiquitination. Recruited to sites of DNA damage at double-strand breaks (DSBs) by binding to ubiquitinated histone H2A and ubiquitinates histone H2A and H2AX, leading to amplify the rnf8-dependent H2A ubiquitination and promoting the formation of 'Lys-63'-linked ubiquitin conjugates. This leads to concentrate ubiquitinated histones H2A and H2AX at DNA lesions to the threshold required for recruitment of tp53bp1 and brca1. Catalyzes monoubiquitination of 'Lys-13' and 'Lys-15' of nucleosomal histone H2A (H2AK13Ub and H2AK15Ub, respectively). In Xenopus tropicalis (Western clawed frog), this protein is E3 ubiquitin-protein ligase rnf168.